The sequence spans 580 residues: tRNA-guanine(15) transglycosylase (580 aa).

The active-site Nucleophile is the aspartate 91. Substrate contacts are provided by aspartate 126 and alanine 192. 3 residues coordinate Zn(2+): cysteine 275, cysteine 277, and cysteine 280. The 76-residue stretch at 504–579 (RMRVVVDEDA…LAVKVRRGVE (76 aa)) folds into the PUA domain.

It belongs to the archaeosine tRNA-ribosyltransferase family. Requires Zn(2+) as cofactor.

It carries out the reaction guanosine(15) in tRNA + 7-cyano-7-deazaguanine = 7-cyano-7-carbaguanosine(15) in tRNA + guanine. The protein operates within tRNA modification; archaeosine-tRNA biosynthesis. Its function is as follows. Exchanges the guanine residue with 7-cyano-7-deazaguanine (preQ0) at position 15 in the dihydrouridine loop (D-loop) of archaeal tRNAs. The protein is tRNA-guanine(15) transglycosylase of Thermococcus kodakarensis (strain ATCC BAA-918 / JCM 12380 / KOD1) (Pyrococcus kodakaraensis (strain KOD1)).